Here is a 193-residue protein sequence, read N- to C-terminus: Large ribosomal subunit protein uL5 (193 aa).

This sequence belongs to the universal ribosomal protein uL5 family. Part of the 50S ribosomal subunit; part of the 5S rRNA/L5/L18/L25 subcomplex. Contacts the 5S rRNA and the P site tRNA. Forms a bridge to the 30S subunit in the 70S ribosome.

In terms of biological role, this is one of the proteins that bind and probably mediate the attachment of the 5S RNA into the large ribosomal subunit, where it forms part of the central protuberance. In the 70S ribosome it contacts protein S13 of the 30S subunit (bridge B1b), connecting the 2 subunits; this bridge is implicated in subunit movement. Contacts the P site tRNA; the 5S rRNA and some of its associated proteins might help stabilize positioning of ribosome-bound tRNAs. The sequence is that of Large ribosomal subunit protein uL5 from Arthrobacter sp. (strain FB24).